The following is a 207-amino-acid chain: Small ribosomal subunit protein uS4 (207 aa).

An S4 RNA-binding domain is found at 97-160 (SRLDNVVYRM…KKQARIVEAL (64 aa)).

Belongs to the universal ribosomal protein uS4 family. In terms of assembly, part of the 30S ribosomal subunit. Contacts protein S5. The interaction surface between S4 and S5 is involved in control of translational fidelity.

In terms of biological role, one of the primary rRNA binding proteins, it binds directly to 16S rRNA where it nucleates assembly of the body of the 30S subunit. Functionally, with S5 and S12 plays an important role in translational accuracy. This is Small ribosomal subunit protein uS4 from Burkholderia pseudomallei (strain 1106a).